A 70-amino-acid polypeptide reads, in one-letter code: UPF0519 protein D (70 aa).

This sequence belongs to the UPF0519 family.

This is UPF0519 protein D from Dictyostelium discoideum (Social amoeba).